A 139-amino-acid chain; its full sequence is Gastrula zinc finger protein XlCGF29.1 (139 aa).

C2H2-type zinc fingers lie at residues 6–28 (FTCTECEESFSLKSRLIAHLLIH), 34–56 (FDSTKCGKGFRRNQYLKEHLSTH), 62–84 (FVCTVCGKTYKYKHGLNTHLHSH), 90–112 (FPCSECRKIFSSKASLDIHLRHH), and 117–139 (FPCTECDKTFKQKKNLKRHQMIH).

This sequence belongs to the krueppel C2H2-type zinc-finger protein family.

It is found in the nucleus. May be involved in transcriptional regulation. This chain is Gastrula zinc finger protein XlCGF29.1, found in Xenopus laevis (African clawed frog).